The sequence spans 298 residues: Troponin T, cardiac muscle (298 aa).

Residues 1–70 (MSDIEEVVEE…EAKEAEDGPM (70 aa)) show a composition bias toward acidic residues. Disordered regions lie at residues 1 to 95 (MSDI…GERV) and 120 to 219 (FENR…EKKK). The residue at position 2 (serine 2) is an N-acetylserine. The residue at position 2 (serine 2) is a Phosphoserine; by CK2. Basic and acidic residues-rich tracts occupy residues 120–183 (FENR…DEAR) and 203–219 (QTERKSGKRQTEREKKK). At threonine 204 the chain carries Phosphothreonine; by PKC/PRKCA. Serine 208 bears the Phosphoserine; by PKC/PRKCA mark. Residue threonine 213 is modified to Phosphothreonine; by PKC/PRKCA and RAF1. Threonine 294 bears the Phosphothreonine; by PKC/PRKCA mark.

The protein belongs to the troponin T family. Phosphorylation at Thr-213 by PRKCA induces significant reduction in myofilament calcium sensitivity and actomyosin ATPase activity. As to expression, heart. The fetal heart shows a greater expression in the atrium than in the ventricle, while the adult heart shows a greater expression in the ventricle than in the atrium. Isoform 6 predominates in normal adult heart. Isoforms 1, 7 and 8 are expressed in fetal heart. Isoform 7 is also expressed in failing adult heart.

Functionally, troponin T is the tropomyosin-binding subunit of troponin, the thin filament regulatory complex which confers calcium-sensitivity to striated muscle actomyosin ATPase activity. This is Troponin T, cardiac muscle (TNNT2) from Homo sapiens (Human).